Here is a 528-residue protein sequence, read N- to C-terminus: Alpha-amylase (528 aa).

The signal sequence occupies residues 1-28 (MNKKWLNIPALIALLAAIAFGSVAPAEA). 2 residues coordinate Ca(2+): Asn168 and Asp228. The active-site Nucleophile is the Asp258. His262 lines the Ca(2+) pocket. Catalysis depends on Glu286, which acts as the Proton donor.

Belongs to the glycosyl hydrolase 13 family. In terms of assembly, monomer. Requires Ca(2+) as cofactor.

The catalysed reaction is Endohydrolysis of (1-&gt;4)-alpha-D-glucosidic linkages in polysaccharides containing three or more (1-&gt;4)-alpha-linked D-glucose units.. The protein is Alpha-amylase of Niallia circulans (Bacillus circulans).